We begin with the raw amino-acid sequence, 32 residues long: Small ribosomal subunit protein uS19 (32 aa).

It belongs to the universal ribosomal protein uS19 family.

In terms of biological role, protein S19 forms a complex with S13 that binds strongly to the 16S ribosomal RNA. This is Small ribosomal subunit protein uS19 (rpsS) from Yersinia enterocolitica.